Here is a 96-residue protein sequence, read N- to C-terminus: Plasminogen-like protein B (96 aa).

The N-terminal stretch at 1–19 (MEHKEVVLLLLLFLKSGQG) is a signal peptide. In terms of domain architecture, PAN spans 20–96 (EPLDDYVNTQ…RMRDAVLFEK (77 aa)). 2 cysteine pairs are disulfide-bonded: Cys-49–Cys-73 and Cys-53–Cys-61.

The protein localises to the secreted. In terms of biological role, may bind noncovalently to lysine binding sites present in the kringle structures of plasminogen. This may interfere with the binding of fibrin or alpha-2-antiplasmin to plasminogen and may result in the localization of activity at sites necessary for extracellular matrix destruction. This chain is Plasminogen-like protein B (PLGLB1), found in Homo sapiens (Human).